Consider the following 200-residue polypeptide: Large ribosomal subunit protein bL25 (200 aa).

Disordered stretches follow at residues methionine 1 to arginine 20 and proline 179 to alanine 200.

It belongs to the bacterial ribosomal protein bL25 family. CTC subfamily. As to quaternary structure, part of the 50S ribosomal subunit; part of the 5S rRNA/L5/L18/L25 subcomplex. Contacts the 5S rRNA. Binds to the 5S rRNA independently of L5 and L18.

Functionally, this is one of the proteins that binds to the 5S RNA in the ribosome where it forms part of the central protuberance. The polypeptide is Large ribosomal subunit protein bL25 (Azoarcus sp. (strain BH72)).